We begin with the raw amino-acid sequence, 254 residues long: 3-deoxy-manno-octulosonate cytidylyltransferase (254 aa).

It belongs to the KdsB family.

Its subcellular location is the cytoplasm. It catalyses the reaction 3-deoxy-alpha-D-manno-oct-2-ulosonate + CTP = CMP-3-deoxy-beta-D-manno-octulosonate + diphosphate. It functions in the pathway nucleotide-sugar biosynthesis; CMP-3-deoxy-D-manno-octulosonate biosynthesis; CMP-3-deoxy-D-manno-octulosonate from 3-deoxy-D-manno-octulosonate and CTP: step 1/1. It participates in bacterial outer membrane biogenesis; lipopolysaccharide biosynthesis. Its function is as follows. Activates KDO (a required 8-carbon sugar) for incorporation into bacterial lipopolysaccharide in Gram-negative bacteria. This chain is 3-deoxy-manno-octulosonate cytidylyltransferase, found in Bordetella petrii (strain ATCC BAA-461 / DSM 12804 / CCUG 43448).